Here is a 233-residue protein sequence, read N- to C-terminus: Large ribosomal subunit protein uL1 (233 aa).

Belongs to the universal ribosomal protein uL1 family. As to quaternary structure, part of the 50S ribosomal subunit.

In terms of biological role, binds directly to 23S rRNA. The L1 stalk is quite mobile in the ribosome, and is involved in E site tRNA release. Functionally, protein L1 is also a translational repressor protein, it controls the translation of the L11 operon by binding to its mRNA. In Shewanella woodyi (strain ATCC 51908 / MS32), this protein is Large ribosomal subunit protein uL1.